The chain runs to 225 residues: Uridylate kinase (225 aa).

9–10 (GS) contacts ATP. Gly-44 contacts UMP. Residues Gly-45 and Arg-49 each coordinate ATP. UMP is bound by residues Asp-66 and 114–120 (THPGHTT). Thr-140, Asn-141, Tyr-146, and Asp-149 together coordinate ATP.

This sequence belongs to the UMP kinase family. As to quaternary structure, homohexamer.

It is found in the cytoplasm. The enzyme catalyses UMP + ATP = UDP + ADP. Its pathway is pyrimidine metabolism; CTP biosynthesis via de novo pathway; UDP from UMP (UMPK route): step 1/1. Its activity is regulated as follows. Inhibited by UTP. Catalyzes the reversible phosphorylation of UMP to UDP. The sequence is that of Uridylate kinase from Thermococcus gammatolerans (strain DSM 15229 / JCM 11827 / EJ3).